The following is a 461-amino-acid chain: GTPase Der (461 aa).

EngA-type G domains are found at residues 3–167 (PQVI…GEKQ) and 190–371 (LKLA…AAWS). GTP contacts are provided by residues 9 to 16 (GRPNVGKS), 56 to 60 (DTAGW), 119 to 122 (NKAE), 196 to 203 (GRPNAGKS), 249 to 253 (DTAGM), and 314 to 317 (NKWD). The KH-like domain maps to 372 to 456 (KRVPTAALNR…PIRLTLRSPK (85 aa)).

This sequence belongs to the TRAFAC class TrmE-Era-EngA-EngB-Septin-like GTPase superfamily. EngA (Der) GTPase family. Associates with the 50S ribosomal subunit.

Functionally, GTPase that plays an essential role in the late steps of ribosome biogenesis. The sequence is that of GTPase Der from Novosphingobium aromaticivorans (strain ATCC 700278 / DSM 12444 / CCUG 56034 / CIP 105152 / NBRC 16084 / F199).